Here is a 130-residue protein sequence, read N- to C-terminus: Small ribosomal subunit protein uS11 (130 aa).

It belongs to the universal ribosomal protein uS11 family. As to quaternary structure, part of the 30S ribosomal subunit. Interacts with proteins S7 and S18. Binds to IF-3.

Its function is as follows. Located on the platform of the 30S subunit, it bridges several disparate RNA helices of the 16S rRNA. Forms part of the Shine-Dalgarno cleft in the 70S ribosome. This is Small ribosomal subunit protein uS11 from Tropheryma whipplei (strain TW08/27) (Whipple's bacillus).